A 371-amino-acid polypeptide reads, in one-letter code: 3-dehydroquinate synthase (371 aa).

NAD(+) is bound by residues 70–75, 104–108, 128–129, lysine 141, and lysine 150; these read DAEDGK, GAVTD, and TT. The Zn(2+) site is built by glutamate 183, histidine 246, and histidine 262.

The protein belongs to the sugar phosphate cyclases superfamily. Dehydroquinate synthase family. It depends on Co(2+) as a cofactor. Zn(2+) is required as a cofactor. Requires NAD(+) as cofactor.

The protein resides in the cytoplasm. The enzyme catalyses 7-phospho-2-dehydro-3-deoxy-D-arabino-heptonate = 3-dehydroquinate + phosphate. Its pathway is metabolic intermediate biosynthesis; chorismate biosynthesis; chorismate from D-erythrose 4-phosphate and phosphoenolpyruvate: step 2/7. Catalyzes the conversion of 3-deoxy-D-arabino-heptulosonate 7-phosphate (DAHP) to dehydroquinate (DHQ). This chain is 3-dehydroquinate synthase, found in Saccharopolyspora erythraea (strain ATCC 11635 / DSM 40517 / JCM 4748 / NBRC 13426 / NCIMB 8594 / NRRL 2338).